Consider the following 231-residue polypeptide: Uracil phosphoribosyltransferase (231 aa).

38–42 contributes to the GTP binding site; it reads KGLVR. 5-phospho-alpha-D-ribose 1-diphosphate-binding positions include R87, R112, and 140-148; that span reads DPMIATGST. Uracil-binding positions include I203 and 208–210; that span reads GDA. D209 contributes to the 5-phospho-alpha-D-ribose 1-diphosphate binding site.

It belongs to the UPRTase family. Requires Mg(2+) as cofactor.

The catalysed reaction is UMP + diphosphate = 5-phospho-alpha-D-ribose 1-diphosphate + uracil. The protein operates within pyrimidine metabolism; UMP biosynthesis via salvage pathway; UMP from uracil: step 1/1. Allosterically activated by GTP. In terms of biological role, catalyzes the conversion of uracil and 5-phospho-alpha-D-ribose 1-diphosphate (PRPP) to UMP and diphosphate. This Methanococcus maripaludis (strain C6 / ATCC BAA-1332) protein is Uracil phosphoribosyltransferase.